The sequence spans 522 residues: Sugar transport protein MST2 (522 aa).

Topologically, residues 1-24 (MAAATAADVAEDTASVYSGKLTLY) are cytoplasmic. A helical transmembrane segment spans residues 25–45 (VFLTCGVAATGGLIIGYDIGI). Over 46–82 (SGGVTSMDTFLGKFFPSVLHQEQTAQGTSQYCKFNSQ) the chain is Extracellular. A helical membrane pass occupies residues 83–103 (PLTAFTSSLYLAALVASFFVA). The Cytoplasmic segment spans residues 104–111 (SFTRALGR). The helical transmembrane segment at 112–132 (KWSMFGGGVSFLAGATLNGAA) threads the bilayer. At 133-134 (RN) the chain is on the extracellular side. A helical membrane pass occupies residues 135-155 (VAMLIVGRILLGIGVAFCGLS). The Cytoplasmic portion of the chain corresponds to 156 to 169 (TPIYLSEMAPPRLR). A helical transmembrane segment spans residues 170–190 (GMLNIGLQLMITVGIFSANLV). At 191–204 (NYGAAKIRGGWGWR) the chain is on the extracellular side. Residues 205-225 (VSLGLAAAPACVIAVGSLFLP) traverse the membrane as a helical segment. The Cytoplasmic segment spans residues 226–291 (DSPSSLINRG…DVLQRRYRPQ (66 aa)). Residues 292 to 312 (LAMAVLIPFFQQLTGINVIMF) form a helical membrane-spanning segment. At 313–329 (YAPVLFKTIGLGGDASL) the chain is on the extracellular side. A helical membrane pass occupies residues 330–350 (MSAVITGLVNIVATFVSIATV). Residues 351–361 (DSLGRRKLLFQ) are Cytoplasmic-facing. A helical membrane pass occupies residues 362–382 (GGCQMLVSQVIIGTLIGVVFG). Over 383 to 391 (TSGDGNISR) the chain is Extracellular. The helical transmembrane segment at 392–412 (ALAVCIVVFICVYVAGFAWSW) threads the bilayer. Topologically, residues 413 to 434 (GPLGVLLPSEIFPLEVRPAGQS) are cytoplasmic. Residues 435 to 455 (ISVAVNMLCTFAVAEAFLPML) traverse the membrane as a helical segment. Over 456–459 (CHMR) the chain is Extracellular. A helical transmembrane segment spans residues 460 to 480 (FGLFYFFSGWVLVMTLFVSAF). At 481–522 (LPETKGVPIEKMTVVWRTHWFWGRFYCNQDADAHVQVANSKV) the chain is on the cytoplasmic side.

It belongs to the major facilitator superfamily. Sugar transporter (TC 2.A.1.1) family.

Its subcellular location is the membrane. In terms of biological role, mediates active uptake of hexoses by sugar:proton symport. Can transport glucose. The chain is Sugar transport protein MST2 from Oryza sativa subsp. japonica (Rice).